Consider the following 773-residue polypeptide: C-Maf-inducing protein (773 aa).

Residues 1–28 are disordered; sequence MDVTSSSGGGDPRQIEETKPLLGSDVSG. The PH domain maps to 54 to 163; that stretch reads LLQEGDIQVC…HSLQWKKKIY (110 aa). A phosphoserine mark is found at Ser-349, Ser-377, Ser-382, and Ser-660. 4 LRR repeats span residues 663-686, 687-707, 712-732, and 736-756; these read NLEN…IKLP, SLKQ…RLLS, MLQV…LALS, and SLCS…EDLK.

Interacts with FLNA.

The protein resides in the nucleus. The protein localises to the cytoplasm. Plays a role in T-cell signaling pathway. The chain is C-Maf-inducing protein (Cmip) from Mus musculus (Mouse).